We begin with the raw amino-acid sequence, 191 residues long: ATP-dependent Clp protease proteolytic subunit 1 (191 aa).

S91 acts as the Nucleophile in catalysis. The active site involves H116.

It belongs to the peptidase S14 family. Fourteen ClpP subunits assemble into 2 heptameric rings which stack back to back to give a disk-like structure with a central cavity, resembling the structure of eukaryotic proteasomes.

The protein localises to the cytoplasm. The catalysed reaction is Hydrolysis of proteins to small peptides in the presence of ATP and magnesium. alpha-casein is the usual test substrate. In the absence of ATP, only oligopeptides shorter than five residues are hydrolyzed (such as succinyl-Leu-Tyr-|-NHMec, and Leu-Tyr-Leu-|-Tyr-Trp, in which cleavage of the -Tyr-|-Leu- and -Tyr-|-Trp bonds also occurs).. Cleaves peptides in various proteins in a process that requires ATP hydrolysis. Has a chymotrypsin-like activity. Plays a major role in the degradation of misfolded proteins. The chain is ATP-dependent Clp protease proteolytic subunit 1 from Chlamydia pneumoniae (Chlamydophila pneumoniae).